The sequence spans 105 residues: TPR repeat-containing protein PA0015 (105 aa).

2 TPR repeats span residues 17 to 50 and 52 to 84; these read ALLR…DPKY and AGWK…AATH.

This Pseudomonas aeruginosa (strain ATCC 15692 / DSM 22644 / CIP 104116 / JCM 14847 / LMG 12228 / 1C / PRS 101 / PAO1) protein is TPR repeat-containing protein PA0015.